The sequence spans 128 residues: Early 4 ORF1 protein (128 aa).

The Cytoplasmic portion of the chain corresponds to 1–26 (MAAAVEALYVVLEREGAILPRQEGFS). A helical transmembrane segment spans residues 27–47 (GVYVFFSPINFVIPPMGAVML). Topologically, residues 48-99 (SLRLRVCIPPGYFGRFLALTDVNQPDVFTESYIMTPDMTEELSVVLFNHGDQ) are extracellular. A helical transmembrane segment spans residues 100–120 (FFYGHAGMAVVRLMLIRVVFP). Residues 121-128 (VVRQASNV) are Cytoplasmic-facing. Positions 125 to 128 (ASNV) match the PBZ domain binding motif motif.

The protein belongs to the adenoviridae E4-ORF1 family. In terms of assembly, may interact with host PDZ proteins through the PDZ domain binding motif (PBM), namely host DLG1, PATJ and TJP2.

Its subcellular location is the host membrane. May modulate tight-junctions functions of infected cells through interactions with PDZ proteins. E4 ORF1 has ben show for Adenovirus 9 to interact with protein involved in tight junction regulation. May play a role in mTOR activation by activating PI3-kinase, thus overriding cellular checkpoint for translation. The polypeptide is Early 4 ORF1 protein (Human adenovirus C serotype 2 (HAdV-2)).